Here is a 484-residue protein sequence, read N- to C-terminus: Malonate-semialdehyde dehydrogenase 2 (484 aa).

NAD(+)-binding residues include Phe153, Lys177, Glu180, Arg181, Ser230, and Thr252. The Nucleophile role is filled by Cys285. Glu385 is an NAD(+) binding site.

It belongs to the aldehyde dehydrogenase family. IolA subfamily. As to quaternary structure, homotetramer.

It carries out the reaction 3-oxopropanoate + NAD(+) + CoA + H2O = hydrogencarbonate + acetyl-CoA + NADH + H(+). The catalysed reaction is 2-methyl-3-oxopropanoate + NAD(+) + CoA + H2O = propanoyl-CoA + hydrogencarbonate + NADH + H(+). The protein operates within polyol metabolism; myo-inositol degradation into acetyl-CoA; acetyl-CoA from myo-inositol: step 7/7. Catalyzes the oxidation of malonate semialdehyde (MSA) and methylmalonate semialdehyde (MMSA) into acetyl-CoA and propanoyl-CoA, respectively. Is involved in a myo-inositol catabolic pathway. Bicarbonate, and not CO2, is the end-product of the enzymatic reaction. This chain is Malonate-semialdehyde dehydrogenase 2, found in Geobacillus kaustophilus (strain HTA426).